The following is a 171-amino-acid chain: MAELDIQISIEDIGWPGEETLLVFCERVLGAAAIYLRDNEKQPFPKMPPEVSLVFTDDASIQDINAEWRGKDKPTNVLSFPAFPVQRGKVPGPMLGDIIIARETVEREAQELEKSFDDHLTHLLVHGFLHLLGYDHMNNAEAETMEGLETRILAQLGLSDPYEGQDLKMEP.

3 residues coordinate Zn(2+): histidine 126, histidine 130, and histidine 136.

This sequence belongs to the endoribonuclease YbeY family. Zn(2+) serves as cofactor.

Its subcellular location is the cytoplasm. Its function is as follows. Single strand-specific metallo-endoribonuclease involved in late-stage 70S ribosome quality control and in maturation of the 3' terminus of the 16S rRNA. This is Endoribonuclease YbeY from Rhizobium etli (strain ATCC 51251 / DSM 11541 / JCM 21823 / NBRC 15573 / CFN 42).